The primary structure comprises 582 residues: Semenogelin-2 (582 aa).

The first 23 residues, 1-23, serve as a signal peptide directing secretion; sequence MKSIILFVLSLLLILEKQAAVMG. 5 disordered regions span residues 25–65, 91–157, 171–192, 272–366, and 393–557; these read KGGS…SSSI, HKTT…GISS, LSKEQASASGAQKGRTQGGSQS, NLNQ…KDIQ, and SNQD…HNTV. Basic and acidic residues predominate over residues 50–59; that stretch reads GQKDKQHTES. Positions 111–134 are enriched in basic residues; the sequence is QKGRDHVKPKRHFRLIVIHRKGGQ. Composition is skewed to polar residues over residues 137–157 and 174–192; these read HGTQNPSQNQGNSPSGKGISS and EQASASGAQKGRTQGGSQS. A compositionally biased stretch (basic and acidic residues) spans 293 to 310; sequence TEERQFNHGEKSVQKDVP. The span at 325–335 shows a compositional bias: polar residues; the sequence is KSQNQVSIPSQ. Composition is skewed to basic and acidic residues over residues 336 to 345, 353 to 366, 396 to 405, and 413 to 426; these read DQEHGHKENK, TEERRLNCGEKDIQ, and TEERRLNGGEKDIQ. Composition is skewed to polar residues over residues 427–437 and 445–455; these read KSVSKGSISIQ and KSQNQVTIPSQ. A compositionally biased stretch (basic and acidic residues) spans 456–465; it reads DQEHGHKENK. Polar residues-rich tracts occupy residues 487 to 498 and 506 to 529; these read KDVSQSSLSFQT and SQIQTPNPNQDQWSGLNAKGNSGK. The span at 530-546 shows a compositional bias: basic and acidic residues; sequence SADREQDLLSHEQESRY. The span at 547–557 shows a compositional bias: polar residues; sequence QQKSSGAHNTV.

The protein belongs to the semenogelin family. Interacts with SERPINA5.

It localises to the secreted. Its function is as follows. Participates in the formation of a gel matrix (sperm coagulum) entrapping the accessory gland secretions and ejaculated spermatozoa. This is Semenogelin-2 (SEMG2) from Colobus guereza (Mantled guereza).